The chain runs to 107 residues: MPRKRLTGIVVSDKMDKTVVVAVEKLVQHPLYKKYVKRTKKYHAHDERNECKIGDVVEIEETRPLSKTKRWRVVRIIQRFEPERVVKEKEDIQEEIEAVEGKGGVES.

Belongs to the universal ribosomal protein uS17 family. As to quaternary structure, part of the 30S ribosomal subunit.

Functionally, one of the primary rRNA binding proteins, it binds specifically to the 5'-end of 16S ribosomal RNA. The polypeptide is Small ribosomal subunit protein uS17 (Thermotoga maritima (strain ATCC 43589 / DSM 3109 / JCM 10099 / NBRC 100826 / MSB8)).